The chain runs to 358 residues: Probable G-protein coupled receptor 25 (358 aa).

At Met1 to Pro43 the chain is on the extracellular side. A helical membrane pass occupies residues Ala44 to Leu64. Residues Ser65–Thr76 are Cytoplasmic-facing. A helical transmembrane segment spans residues Phe77–Ala97. Residues Ala98–Lys113 lie on the Extracellular side of the membrane. Cys112 and Cys191 are oxidised to a cystine. A helical transmembrane segment spans residues Val114–Ser134. The Cytoplasmic segment spans residues Val135 to Cys155. The chain crosses the membrane as a helical span at residues Val156–Leu176. At Tyr177 to Gln200 the chain is on the extracellular side. Residues Gly201–Cys221 traverse the membrane as a helical segment. The Cytoplasmic portion of the chain corresponds to Tyr222–Ser239. The chain crosses the membrane as a helical span at residues Leu240–Leu260. Over Arg261–Trp284 the chain is Extracellular. Residues Gly285–Leu307 form a helical membrane-spanning segment. Topologically, residues Asp308 to Trp358 are cytoplasmic. Positions Asp339–Trp358 are disordered.

This sequence belongs to the G-protein coupled receptor 1 family.

It is found in the membrane. Its function is as follows. Orphan receptor. This chain is Probable G-protein coupled receptor 25 (Gpr25), found in Mus musculus (Mouse).